A 228-amino-acid polypeptide reads, in one-letter code: Cytochrome c oxidase subunit 2 (228 aa).

The Mitochondrial intermembrane portion of the chain corresponds to 1–26 (MATWANLGLQNSSSPLMEQLNFFHDH). A helical transmembrane segment spans residues 27-48 (TVLILIMITVMITYVMGMLFFN). The Mitochondrial matrix portion of the chain corresponds to 49–62 (KFTNRYLLHGQTIE). Residues 63–82 (IIWTILPAIILMFIAFPSLR) traverse the membrane as a helical segment. The Mitochondrial intermembrane segment spans residues 83 to 228 (LLYLLDEINS…FIKWVSSQLN (146 aa)). Histidine 161, cysteine 196, glutamate 198, cysteine 200, histidine 204, and methionine 207 together coordinate Cu cation. Glutamate 198 provides a ligand contact to Mg(2+).

This sequence belongs to the cytochrome c oxidase subunit 2 family. In terms of assembly, component of the cytochrome c oxidase (complex IV, CIV), a multisubunit enzyme composed of a catalytic core of 3 subunits and several supernumerary subunits. The complex exists as a monomer or a dimer and forms supercomplexes (SCs) in the inner mitochondrial membrane with ubiquinol-cytochrome c oxidoreductase (cytochrome b-c1 complex, complex III, CIII). The cofactor is Cu cation.

Its subcellular location is the mitochondrion inner membrane. It carries out the reaction 4 Fe(II)-[cytochrome c] + O2 + 8 H(+)(in) = 4 Fe(III)-[cytochrome c] + 2 H2O + 4 H(+)(out). Its function is as follows. Component of the cytochrome c oxidase, the last enzyme in the mitochondrial electron transport chain which drives oxidative phosphorylation. The respiratory chain contains 3 multisubunit complexes succinate dehydrogenase (complex II, CII), ubiquinol-cytochrome c oxidoreductase (cytochrome b-c1 complex, complex III, CIII) and cytochrome c oxidase (complex IV, CIV), that cooperate to transfer electrons derived from NADH and succinate to molecular oxygen, creating an electrochemical gradient over the inner membrane that drives transmembrane transport and the ATP synthase. Cytochrome c oxidase is the component of the respiratory chain that catalyzes the reduction of oxygen to water. Electrons originating from reduced cytochrome c in the intermembrane space (IMS) are transferred via the dinuclear copper A center (CU(A)) of subunit 2 and heme A of subunit 1 to the active site in subunit 1, a binuclear center (BNC) formed by heme A3 and copper B (CU(B)). The BNC reduces molecular oxygen to 2 water molecules using 4 electrons from cytochrome c in the IMS and 4 protons from the mitochondrial matrix. This is Cytochrome c oxidase subunit 2 (COII) from Culex quinquefasciatus (Southern house mosquito).